Here is a 727-residue protein sequence, read N- to C-terminus: Pre-B-cell leukemia transcription factor-interacting protein 1 (727 aa).

Over residues 1 to 10 the composition is skewed to polar residues; the sequence is MASCPDSDNS. The segment at 1–135 is disordered; the sequence is MASCPDSDNS…SPHRSLPSSP (135 aa). The segment covering 39–53 has biased composition (low complexity); it reads RAPQSPSRAAAEESA. Ser43 is modified (phosphoserine). Positions 61–70 are enriched in polar residues; that stretch reads TVSQNESSKS. 5 positions are modified to phosphoserine: Ser130, Ser134, Ser147, Ser148, and Ser149. Thr153 carries the post-translational modification Phosphothreonine. 2 coiled-coil regions span residues 269–353 and 380–421; these read QNMA…QGAD and SPGF…SLKE. The Nuclear localization signal signature appears at 488 to 506; sequence WKTEHWKHKKEASGREKSW. Disordered regions lie at residues 491–568 and 701–727; these read EHWK…AKDR and KRSG…HRQG. Basic and acidic residues-rich tracts occupy residues 498–544, 551–568, and 716–727; these read EASG…EPPR, PSGE…AKDR, and GPREEHSPHRQG. The Nuclear localization signal signature appears at 696-719; that stretch reads DKALKKRSGKKDKHLQNRVVGPRE.

Interacts with ESR1, PBX1, PBX2 and PBX3. Interacts with TEX11.

Its subcellular location is the cytoplasm. It is found in the cytoskeleton. The protein resides in the nucleus. In terms of biological role, regulator of pre-B-cell leukemia transcription factors (BPXs) function. Inhibits the binding of PBX1-HOX complex to DNA and blocks the transcriptional activity of E2A-PBX1. Tethers estrogen receptor-alpha (ESR1) to microtubules and allows them to influence estrogen receptors-alpha signaling. The sequence is that of Pre-B-cell leukemia transcription factor-interacting protein 1 (PBXIP1) from Bos taurus (Bovine).